A 336-amino-acid polypeptide reads, in one-letter code: Urokinase plasminogen activator surface receptor (336 aa).

The first 23 residues, 1-23 (MGHPLLLPLLLLLLHTGVPASWG), serve as a signal peptide directing secretion. UPAR/Ly6 domains lie at 24 to 111 (LRCM…VTFP), 116 to 208 (LECI…LSLA), and 215 to 302 (HRCY…EDIQ). Intrachain disulfides connect C26-C47, C29-C35, and C40-C68. N-linked (GlcNAc...) asparagine glycosylation is present at N75. Intrachain disulfides connect C94–C99, C118–C145, C121–C128, C138–C170, C176–C193, C194–C199, C217–C245, C220–C228, C238–C264, C270–C288, and C289–C294. N-linked (GlcNAc...) asparagine glycosylation is found at N195 and N223.

Monomer. Interacts (via the UPAR/Ly6 domains) with SRPX2. Interacts with MRC2. Interacts with FAP (seprase); the interaction occurs at the cell surface of invadopodia membrane. Interacts with SORL1 (via N-terminal ectodomain); this interaction decreases PLAUR internalization. The ternary complex composed of PLAUR-PLAU-SERPINE1 also interacts with SORL1.

It localises to the cell membrane. The protein localises to the cell projection. Its subcellular location is the invadopodium membrane. Acts as a receptor for urokinase plasminogen activator. Plays a role in localizing and promoting plasmin formation. Mediates the proteolysis-independent signal transduction activation effects of U-PA. It is subject to negative-feedback regulation by U-PA which cleaves it into an inactive form. In Aotus trivirgatus (Three-striped night monkey), this protein is Urokinase plasminogen activator surface receptor (PLAUR).